A 343-amino-acid chain; its full sequence is Inositol 2-dehydrogenase 1 (343 aa).

The protein belongs to the Gfo/Idh/MocA family. Homotetramer.

The enzyme catalyses myo-inositol + NAD(+) = scyllo-inosose + NADH + H(+). Its function is as follows. Involved in the oxidation of myo-inositol (MI) to 2-keto-myo-inositol (2KMI or 2-inosose). The chain is Inositol 2-dehydrogenase 1 from Mycolicibacterium vanbaalenii (strain DSM 7251 / JCM 13017 / BCRC 16820 / KCTC 9966 / NRRL B-24157 / PYR-1) (Mycobacterium vanbaalenii).